The chain runs to 371 residues: Opsin Rh1 (371 aa).

Over 1–47 (MERYSTPLIGPSFAALTNGSVTDKVTPDMAHLVHPYWNQFPAMEPKW) the chain is Extracellular. N-linked (GlcNAc...) asparagine glycosylation is present at Asn18. Residues 48–72 (AKFLAAYMVLIATISWCGNGVVIYI) form a helical membrane-spanning segment. The Cytoplasmic portion of the chain corresponds to 73 to 84 (FSTTKSLRTPAN). A helical transmembrane segment spans residues 85 to 110 (LLVINLAISDFGIMITNTPMMGINLF). Residues 111–124 (YETWVLGPLMCDIY) lie on the Extracellular side of the membrane. A disulfide bond links Cys121 and Cys198. The helical transmembrane segment at 125 to 144 (GGLGSAFGCSSILSMCMISL) threads the bilayer. Over 145–163 (DRYNVIVKGMAGQPMTIKL) the chain is Cytoplasmic. The chain crosses the membrane as a helical span at residues 164–187 (AIMKIALIWFMASIWTLAPVFGWS). The Extracellular segment spans residues 188 to 211 (RYVPEGNLTSCGIDYLERDWNPRS). A helical transmembrane segment spans residues 212–239 (YLIFYSIFVYYLPLFLICYSYWFIIAAV). The Cytoplasmic segment spans residues 240 to 274 (SAHEKAMREQAKKMNVKSLRSSEDADKSAEGKLAK). The chain crosses the membrane as a helical span at residues 275 to 298 (VALVTISLWFMAWTPYTIINTLGL). Over 299–305 (FKYEGLT) the chain is Extracellular. The chain crosses the membrane as a helical span at residues 306-330 (PLNTIWGACFAKSAACYNPIVYGIS). At Lys317 the chain carries N6-(retinylidene)lysine. At 331–371 (HPKYGIALKEKCPCCVFGKVDDGKASDATSQATNNESETKA) the chain is on the cytoplasmic side.

It belongs to the G-protein coupled receptor 1 family. Opsin subfamily. In terms of processing, phosphorylated on some or all of the serine and threonine residues present in the C-terminal region.

It localises to the cell projection. The protein resides in the rhabdomere membrane. Functionally, visual pigments are the light-absorbing molecules that mediate vision. They consist of an apoprotein, opsin, covalently linked to cis-retinal. This Calliphora vicina (Blue blowfly) protein is Opsin Rh1 (NINAE).